Reading from the N-terminus, the 265-residue chain is Homeobox protein Nkx-6.3 (265 aa).

A DNA-binding region (homeobox) is located at residues 139 to 198 (KKHTRPTFTGHQIFALEKTFEQTKYLAGPERARLAYSLGMTESQVKVWFQNRRTKWRKKS). The segment at 196–240 (KKSALEPSSSTPRAPGGAGAGAGGDRAPSENEDDEYNKPLDPDSD) is disordered.

It is found in the nucleus. Putative transcription factor, which may be involved in patterning of central nervous system and pancreas. This chain is Homeobox protein Nkx-6.3 (NKX6-3), found in Homo sapiens (Human).